Consider the following 86-residue polypeptide: uncharacterized protein (86 aa).

This is an uncharacterized protein from Acidianus bottle-shaped virus (isolate Italy/Pozzuoli) (ABV).